The sequence spans 568 residues: Nucleoprotein (568 aa).

The binding site for the cap structure m7GTP stretch occupies residues 54–240 (MRKEKRDDSD…IDGNKSAINI (187 aa)). Mn(2+) is bound by residues aspartate 388 and glutamate 390. Zn(2+) contacts are provided by glutamate 398, cysteine 505, histidine 508, and cysteine 528. Aspartate 532 is a binding site for Mn(2+).

The protein belongs to the arenaviridae nucleocapsid protein family. As to quaternary structure, homomultimerizes to form the nucleocapsid. Binds to viral genomic RNA. Interacts with glycoprotein G2. Interacts with protein Z; this interaction probably directs the encapsidated genome to budding sites. Interacts with protein L; this interaction does not interfere with Z-L interaction. Interacts with host IKBKE (via Protein kinase domain); the interaction inhibits IKBKE kinase activity.

It localises to the virion. The protein resides in the host cytoplasm. In terms of biological role, encapsidates the genome, protecting it from nucleases. The encapsidated genomic RNA is termed the nucleocapsid (NC). Serves as template for viral transcription and replication. The increased presence of protein N in host cell does not seem to trigger the switch from transcription to replication as observed in other negative strain RNA viruses. Through the interaction with host IKBKE, strongly inhibits the phosphorylation and nuclear translocation of host IRF3, a protein involved in interferon activation pathway, leading to the inhibition of interferon-beta and IRF3-dependent promoters activation. Also encodes a functional 3'-5' exoribonuclease that degrades preferentially dsRNA substrates and thereby participates in the suppression of interferon induction. The sequence is that of Nucleoprotein from Praomys (African soft-furred rats).